The chain runs to 167 residues: Small ribosomal subunit protein uS5 (167 aa).

The region spanning 12–75 is the S5 DRBM domain; it reads LNEKLIAVNR…EKARRNIRDV (64 aa).

It belongs to the universal ribosomal protein uS5 family. In terms of assembly, part of the 30S ribosomal subunit. Contacts proteins S4 and S8.

Its function is as follows. With S4 and S12 plays an important role in translational accuracy. Functionally, located at the back of the 30S subunit body where it stabilizes the conformation of the head with respect to the body. This Psychromonas ingrahamii (strain DSM 17664 / CCUG 51855 / 37) protein is Small ribosomal subunit protein uS5.